A 936-amino-acid polypeptide reads, in one-letter code: F-box protein dre-1 (936 aa).

Positions 1–67 (MSSSSSPFFH…GSSEADNPTL (67 aa)) are disordered. Over residues 22-36 (QQSPSYSQNSNSPSQ) the composition is skewed to low complexity. Polar residues predominate over residues 48–63 (GSTSMRYSPSGSSEAD). The 47-residue stretch at 159-205 (QDHINRLPEELLLKVFSFLPDKSLLACSSVSYRFNQISNSHEVWKEL) folds into the F-box domain. 18 PbH1 repeats span residues 405 to 427 (SAAP…YITD), 428 to 450 (NATG…WVKN), 451 to 473 (HANP…FTFE), 474 to 496 (HGQG…EVKN), 497 to 519 (SANP…YVHE), 520 to 542 (RGRG…WITS), 543 to 565 (HSDP…YIFG), 566 to 588 (EGRG…QIRS), 589 to 611 (QSDP…YVHE), 612 to 634 (KGRG…WVTT), 635 to 657 (GSSP…YFYD), 658 to 680 (QGHG…QIRT), 681 to 703 (GSNP…LVYN), 704 to 726 (GGKG…WIKT), 727 to 749 (DSEP…CIFN), 750 to 772 (RGKG…LIST), 773 to 795 (ESNP…EITN), and 796 to 818 (GATA…CVAT). The UBR-type zinc-finger motif lies at 843 to 914 (GLCLFKVSSN…LERHCHLQNV (72 aa)).

As to quaternary structure, component of a SCF ubiquitin ligase complex. Interacts (via F-box) with skr-1. Interacts with blmp-1; the interaction targets blmp-1 for proteasomal degradation. Interacts with ced-9; the interaction inhibits ced-9 activity, either directly or indirectly. As to expression, in mid-embryogenesis, expression is most prominent in epidermal and intestinal cells. By the 1.5-fold stage of embryogenesis, expression is additionally detected in neurons and other cells. During larval and adult stages, highest expression is seen in epidermal seam cells and hypodermis. In larvae, strongly expressed in the P epidermal blast cells and descendents that give rise to the vulva and weakly expressed in the somatic gonad, including the gonadoblasts, the anchor cell and the distal tip cells. Some weak expression also seen in adult spermatheca and uterus. In the musculature, expressed in the pharynx, anal depressor, sex muscles, and body wall muscles. Detected in neurons of the head, tail, ventral cord and periphery. Also expressed in the embryonic tail spike cell.

Its subcellular location is the nucleus. The protein localises to the cytoplasm. It functions in the pathway protein modification; protein ubiquitination. Its function is as follows. Substrate recognition component of a SCF (SKP1-CUL1-F-box protein) E3 ubiquitin-protein ligase complex which mediates the ubiquitination and subsequent proteasomal degradation of target proteins including blmp-1. Promotes ubiquitination of snail family proteins ces-1, scrt-1 and snai-1. Heterochronic protein which is required for the timing of gonad development and epidermal seam cell differentiation. Regulates tail-spike cell death through inhibition of the apoptosis regulator ced-9. The chain is F-box protein dre-1 from Caenorhabditis elegans.